A 191-amino-acid polypeptide reads, in one-letter code: NADH-quinone oxidoreductase subunit B (191 aa).

Cysteine 70, cysteine 71, cysteine 135, and cysteine 165 together coordinate [4Fe-4S] cluster.

This sequence belongs to the complex I 20 kDa subunit family. NDH-1 is composed of 14 different subunits. Subunits NuoB, C, D, E, F, and G constitute the peripheral sector of the complex. It depends on [4Fe-4S] cluster as a cofactor.

It localises to the cell inner membrane. The catalysed reaction is a quinone + NADH + 5 H(+)(in) = a quinol + NAD(+) + 4 H(+)(out). Functionally, NDH-1 shuttles electrons from NADH, via FMN and iron-sulfur (Fe-S) centers, to quinones in the respiratory chain. The immediate electron acceptor for the enzyme in this species is believed to be ubiquinone. Couples the redox reaction to proton translocation (for every two electrons transferred, four hydrogen ions are translocated across the cytoplasmic membrane), and thus conserves the redox energy in a proton gradient. This is NADH-quinone oxidoreductase subunit B from Parvibaculum lavamentivorans (strain DS-1 / DSM 13023 / NCIMB 13966).